A 4516-amino-acid polypeptide reads, in one-letter code: Dynein axonemal heavy chain 1 (4516 aa).

The stem stretch occupies residues 1-1748; the sequence is MVTLSISDTL…YIRAVNAEFI (1748 aa). A disordered region spans residues 78 to 160; it reads SSGSDKSLKN…RKSPLAGTDK (83 aa). 2 stretches are compositionally biased toward basic and acidic residues: residues 83–97 and 113–129; these read KSLKNGMEECDKEEA and ENHDLEKMLKESSRNPE. AAA stretches follow at residues 1749–1956, 2016–2249, 2422–2682, and 2780–2972; these read YGYE…VISA, QAIR…TTVK, TMMP…VFQG, and DYNQ…CCTI. Residues 1787–1794 carry the GPAGTGKT motif motif; sequence GPAGTGKT. Residue 1787–1794 coordinates ATP; sequence GPAGTGKT. A CFDEFNR motif motif is present at residues 1837–1843; it reads CFDEFNR. ATP contacts are provided by residues 2054–2061, 2460–2467, and 2819–2826; these read GPTGSGKS, GPTGTGKT, and GVGGSGRS. Positions 2987–3285 are stalk; the sequence is ATRFLHEIPE…MHKYHFVAKA (299 aa). A coiled-coil region spans residues 3293-3394; sequence LREAQDDLEV…QDTVENLENM (102 aa). 2 AAA regions span residues 3388–3618 and 3831–4050; these read VENL…EERP and LPAF…SYNS.

Belongs to the dynein heavy chain family. As to quaternary structure, consists of at least two heavy chains and a number of intermediate and light chains. In terms of tissue distribution, expressed in brain.

Its subcellular location is the cytoplasm. The protein localises to the cytoskeleton. It is found in the cilium axoneme. It localises to the cell projection. The protein resides in the cilium. Its subcellular location is the flagellum. Functionally, force generating protein of cilia required for sperm flagellum motility. Produces force towards the minus ends of microtubules. Dynein has ATPase activity; the force-producing power stroke is thought to occur on release of ADP. Required in spermatozoa for the formation of the inner dynein arms and biogenesis of the axoneme. This Rattus norvegicus (Rat) protein is Dynein axonemal heavy chain 1.